The following is an 83-amino-acid chain: YNIPLGWGRRDMPGCLGVLGNRDLYDDVSRICSDCQNVFRDKNVESKCRSDCFSTSYFETCIMALDLAEKISDYKLHASILKE.

Disulfide bonds link C15–C52, C32–C48, and C35–C61.

Found in the sinus glands of both male and female. Found also in the brain; the neuroendocrine structures of the protocerebrum.

It is found in the secreted. Inhibits secondary vitellogenesis in females. Has no hyperglycemic or molt-inhibiting activity. The polypeptide is Vitellogenesis-inhibiting hormone (Armadillidium vulgare (Pillbug)).